The primary structure comprises 2294 residues: Reducing polyketide synthase BOA9 (2294 aa).

Residues 4–409 enclose the Ketosynthase family 3 (KS3) domain; that stretch reads PEPVAIIGMG…GANATAIVEA (406 aa). Residues 537–853 form a malonyl-CoA:ACP transacylase (MAT) domain region; the sequence is IFTGQGAQNA…DYAATLVRGQ (317 aa). Ser-630 acts as the For malonyltransferase activity in catalysis. Residues 930 to 1067 are N-terminal hotdog fold; the sequence is HDLLGAILPG…GTVTKKKAVT (138 aa). Residues 930-1104 form a dehydratase (DH) domain region; it reads HDLLGAILPG…LNYGPAFNGL (175 aa). One can recognise a PKS/mFAS DH domain in the interval 930 to 1236; it reads HDLLGAILPG…CTQYSEALDD (307 aa). The Proton acceptor; for dehydratase activity role is filled by His-962. Residues 1078-1236 form a C-terminal hotdog fold region; the sequence is QEPKAARTWY…CTQYSEALDD (159 aa). The Proton donor; for dehydratase activity role is filled by Asp-1142. Residues 1618-1908 form an enoyl reductase (ER) domain region; it reads GIFDTIHFKD…KNSRIGRVVV (291 aa). The ketoreductase (KR) domain stretch occupies residues 1934–2107; it reads VHTYLLGVLE…LPATTISLTV (174 aa). One can recognise a Carrier domain in the interval 2214 to 2292; that stretch reads LLLPDILEMI…SLAKKIYDIR (79 aa). At Ser-2251 the chain carries O-(pantetheine 4'-phosphoryl)serine.

Its pathway is polyketide biosynthesis. In terms of biological role, reducing polyketide synthase; part of the gene cluster B that mediates the biosynthesis of botcinic acid and its botcinin derivatives, acetate-derived polyketides that contribute to virulence when combined with the sesquiterpene botrydial. Botcinic acid and its derivatives have been shown to induce chlorosis and necrosis during host plant infection, but also have antifungal activities. Two polyketide synthases, BOA6 and BOA9, are involved in the biosynthesis of botcinins. BOA6 mediates the formation of the per-methylated tetraketide core by condensation of four units of malonyl-CoA with one unit of acetyl-CoA, which would be methylated in activated methylene groups to yield a bicyclic acid intermediate that could then either be converted to botrylactone derivatives or lose the starter acetate unit through a retro-Claisen type C-C bond cleavage to yield botcinin derivatives. The second polyketide synthase, BOA9, is probably required for the biosynthesis of the tetraketide side chain of botcinins. The methyltransferase (MT) domain within BOA6 is probably responsible for the incorporation of four methyl groups. The trans-enoyl reductase BOA5 might take over the enoyl reductase function of BOA6 that misses an ER domain. The monooxygenases BOA2, BOA3 and BOA4 might be involved in further hydroxylations at C4, C5 and C8, whereas BOA7, close to BOA9, could potentially be involved in the hydroxylation at C4 in the side chain of botcinins. In Botryotinia fuckeliana (strain B05.10) (Noble rot fungus), this protein is Reducing polyketide synthase BOA9.